We begin with the raw amino-acid sequence, 440 residues long: General transcription factor IIE subunit 1 (440 aa).

Ala-2 is subject to N-acetylalanine. The HTH TFE/IIEalpha-type domain occupies 14–104; that stretch reads LKRLAKYVIR…NYRTLVNVVK (91 aa). Residue Lys-67 is modified to N6-acetyllysine. 4 residues coordinate Zn(2+): Cys-129, Cys-132, Cys-154, and Cys-157. The C4-type zinc-finger motif lies at 129 to 157; it reads CPVCCSTFTDLEANQLFDPMTGTFRCTFC. Ser-268 is modified (phosphoserine). Residues 333-353 show a composition bias toward low complexity; the sequence is SSVTAGSVGAAAPVTAANGSD. Positions 333 to 395 are disordered; it reads SSVTAGSVGA…EEFEEVADDP (63 aa). Acidic residues-rich tracts occupy residues 354–364 and 381–393; these read SESETSESDDD and EDEE…EVAD.

It belongs to the TFIIE alpha subunit family. In terms of assembly, tetramer of two alpha and two beta chains. Interacts with TAF6/TAFII80. Interacts with ATF7IP. Interacts with SND1. Part of TBP-based Pol II pre-initiation complex (PIC), in which Pol II core assembles with general transcription factors and other specific initiation factors including GTF2E1, GTF2E2, GTF2F1, GTF2F2, TCEA1, ERCC2, ERCC3, GTF2H2, GTF2H3, GTF2H4, GTF2H5, GTF2A1, GTF2A2, GTF2B and TBP; this large multi-subunit PIC complex mediates DNA unwinding and targets Pol II core to the transcription start site where the first phosphodiester bond forms.

The protein resides in the nucleus. Its function is as follows. Recruits TFIIH to the initiation complex and stimulates the RNA polymerase II C-terminal domain kinase and DNA-dependent ATPase activities of TFIIH. Both TFIIH and TFIIE are required for promoter clearance by RNA polymerase. The chain is General transcription factor IIE subunit 1 (Gtf2e1) from Mus musculus (Mouse).